The following is a 264-amino-acid chain: Diphthine synthase (264 aa).

Residues L10, D87, V90, 115–116 (SI), L166, A209, and H234 contribute to the S-adenosyl-L-methionine site.

Belongs to the diphthine synthase family. As to quaternary structure, homodimer.

The enzyme catalyses 2-[(3S)-amino-3-carboxypropyl]-L-histidyl-[translation elongation factor 2] + 3 S-adenosyl-L-methionine = diphthine-[translation elongation factor 2] + 3 S-adenosyl-L-homocysteine + 3 H(+). It participates in protein modification; peptidyl-diphthamide biosynthesis. S-adenosyl-L-methionine-dependent methyltransferase that catalyzes the trimethylation of the amino group of the modified target histidine residue in translation elongation factor 2 (EF-2), to form an intermediate called diphthine. The three successive methylation reactions represent the second step of diphthamide biosynthesis. In Thermococcus gammatolerans (strain DSM 15229 / JCM 11827 / EJ3), this protein is Diphthine synthase.